We begin with the raw amino-acid sequence, 286 residues long: Probable glucose uptake protein GlcU (286 aa).

10 consecutive transmembrane segments (helical) span residues 4 to 22, 27 to 49, 53 to 72, 85 to 107, 111 to 133, 154 to 176, 181 to 198, 211 to 228, 233 to 255, and 267 to 284; these read IFLA…LFNV, GPYS…VYIF, VLTP…WALG, VSRT…GVIV, WSTT…GVIL, IVIL…LFNV, ALLP…LLTF, IIPG…FISQ, VATS…ILIL, and IVVG…LGIA.

Belongs to the GRP transporter (TC 2.A.7.5) family.

The protein localises to the cell membrane. Functionally, involved in the uptake of glucose. This Bacillus cereus (strain ATCC 14579 / DSM 31 / CCUG 7414 / JCM 2152 / NBRC 15305 / NCIMB 9373 / NCTC 2599 / NRRL B-3711) protein is Probable glucose uptake protein GlcU (glcU).